The following is a 60-amino-acid chain: Homeobox protein engrailed-like (60 aa).

Positions 1–41 (GEQLCRLRAEFQASRYLTEERRTALARELRLNEAQIKIWFQ) form a DNA-binding region, homeobox.

It belongs to the engrailed homeobox family.

Its subcellular location is the nucleus. The protein is Homeobox protein engrailed-like of Lampetra planeri (Brook lamprey).